The primary structure comprises 655 residues: Probable potassium transport system protein Kup (655 aa).

The next 12 membrane-spanning stretches (helical) occupy residues 19-39, 42-62, 102-122, 132-152, 161-181, 214-234, 246-266, 282-302, 338-358, 370-390, 395-415, and 420-440; these read GLLISLGIIYGDIGTSPLYVM, IAGGNVISENLILGGLSCVFW, VWPAMIGGAAMLADGIITPPI, LIFNKDIPTIPIVLAIIVMLF, IVGKFFGPIMFIWFAMLATLG, SGFWLLGAVFLCTTGAEALYS, ISWIFVKLALLINYFGQGAWI, IMPEWFIVYGIIIATMAAIIA, LFIPSINLLLLAGCIFVVLWF, LAINITFLMTTILLAYYLLII, FIWVGLLILMYLIIEVSFLVA, and FFHGGYFTLISSGILAFIMII.

It belongs to the HAK/KUP transporter (TC 2.A.72) family.

It is found in the cell inner membrane. It carries out the reaction K(+)(in) + H(+)(in) = K(+)(out) + H(+)(out). In terms of biological role, transport of potassium into the cell. Likely operates as a K(+):H(+) symporter. The chain is Probable potassium transport system protein Kup from Cytophaga hutchinsonii (strain ATCC 33406 / DSM 1761 / CIP 103989 / NBRC 15051 / NCIMB 9469 / D465).